Reading from the N-terminus, the 359-residue chain is Aromatic amino acid aminotransferase (359 aa).

The segment covering 1-12 has biased composition (basic and acidic residues); it reads MSETSPKLRAEL. The interval 1–21 is disordered; the sequence is MSETSPKLRAELEGIPTYKPG. Position 223 is an N6-(pyridoxal phosphate)lysine (Lys223).

The protein belongs to the class-II pyridoxal-phosphate-dependent aminotransferase family. As to quaternary structure, homodimer. Requires pyridoxal 5'-phosphate as cofactor.

It catalyses the reaction an aromatic L-alpha-amino acid + 2-oxoglutarate = an aromatic oxo-acid + L-glutamate. Aminotransferase that catalyzes the conversion of aromatic amino acids and 2-oxoglutarate into corresponding aromatic oxo acids and L-glutamate. This Streptomyces coelicolor (strain ATCC BAA-471 / A3(2) / M145) protein is Aromatic amino acid aminotransferase.